The sequence spans 22 residues: AVSCFKACMKKRGIPFVCSVDC.

In terms of processing, contains 2 disulfide bonds. Expressed by the venom gland.

It is found in the secreted. In terms of biological role, not lethal to mice by intraperitoneal or intracerebroventricular injections in doses up to 100 micrograms. The chain is 2.39 kDa venom peptide from Heterometrus spinifer (Asia giant forest scorpion).